The primary structure comprises 564 residues: MTSHVLALAFLLHACTALAWQETNSRSVVAHLDSGIIRGVPRSADGIKFASFLGVPYAKQPVGELRFKELEPLEPWDNILNATNEGPICFQTDVLYGRLMAASEMSEACIYANIHVPWQSLPRVRGTTPLRPILVFIHGGGFAFGSGHEDLHGPEYLVTKNVIVITFNYRLNVFGFLSMNTTKIPGNAGLRDQVTLLRWVQRNAKNFGGDPSDITIAGQSAGASAAHLLTLSKATEGLFKRAILMSGTGMSYFFTTSPLFAAYISKQLLQILGINETDPEEIHRQLIDLPAEKLNEANAVLIEQIGLTTFLPIVESPLPGVTTIIDDDPEILIAEGRGKNVPLLIGFTSSECETFRNRLLNFDLVKKIQDNPTIIIPPKLLFMTPPELLMELAKTIERKYYNGTISIDNFVKSCSDGFYEYPALKLAQKRAETGGAPLYLYRFAYEGQNSIIKKVMGLNHEGVGHIEDLTYVFKVNSMSEALHASPSENDVKMKNLMTGYFLNFIKCSQPTCEDNNSLEVWPANNGMQYEDIVSPTIIRSKEFASRQQDIIEFFDSFTSRSPLE.

Residues 1–19 (MTSHVLALAFLLHACTALA) form the signal peptide. N-linked (GlcNAc...) asparagine glycosylation is present at asparagine 81. Residues cysteine 89 and cysteine 109 are joined by a disulfide bond. A glycan (N-linked (GlcNAc...) asparagine) is linked at asparagine 180. Serine 220 functions as the Acyl-ester intermediate in the catalytic mechanism. The active-site Charge relay system is the glutamate 351. N-linked (GlcNAc...) asparagine glycosylation occurs at asparagine 402. The active-site Charge relay system is histidine 465. N-linked (GlcNAc...) asparagine glycosylation is present at asparagine 515.

This sequence belongs to the type-B carboxylesterase/lipase family.

The enzyme catalyses juvenile hormone I + H2O = juvenile hormone I carboxylate + methanol + H(+). It carries out the reaction juvenile hormone III + H2O = juvenile hormone III carboxylate + methanol + H(+). Its function is as follows. JH esterase plays a crucial role in the decrease of JH activity in lepidopteran insects, by hydrolyzing the methyl ester of JH. It is also involved in the transport of JH. The chain is Juvenile hormone esterase from Heliothis virescens (Tobacco budworm moth).